We begin with the raw amino-acid sequence, 430 residues long: MGAIQALRGTRDILPHEVGYWQQVERVAAEILSRALYLEIRPPIFEQTALFERGIGEGTDVVGKEMYTFKDRGDRSITLRPEGTAGVVRSFIEHNLYATGGVQRLWYTGPMFRYERPQAGRQRQFHQIGLELLGSGDYRADVEVIALATDILQTLGLKNLKLDLNSVGNREDRQNYRQALVDYLTPYKAQLDPDSQDRLERNPLRILDSKDERTKIICQDAPSILEYLGTESKRHFEQVQQLLGDLNIKYQLNPCLVRGLDYYTHTAFEIQSDDLGAQATVCGGGRYDGLVVELGGPATPAVGWAIGMERLILLLQQLQSTPTLTPDIYIVSRGEKAESQGLILAQKLRHWGLSVELDLSGSAFGKQFKRADRTGAIACLILGDQEAENQTVQLKWMTSSQQQTLTQVELLSQLEELKQSFDRHRQSRDD.

Belongs to the class-II aminoacyl-tRNA synthetase family. In terms of assembly, homodimer.

The protein resides in the cytoplasm. The enzyme catalyses tRNA(His) + L-histidine + ATP = L-histidyl-tRNA(His) + AMP + diphosphate + H(+). This chain is Histidine--tRNA ligase, found in Gloeothece citriformis (strain PCC 7424) (Cyanothece sp. (strain PCC 7424)).